A 311-amino-acid chain; its full sequence is HPr kinase/phosphorylase (311 aa).

Catalysis depends on residues histidine 139 and lysine 160. Position 154–161 (154–161) interacts with ATP; it reads GDSGVGKS. Serine 161 provides a ligand contact to Mg(2+). Residue aspartate 178 is the Proton acceptor; for phosphorylation activity. Proton donor; for dephosphorylation activity of the active site. Residues 202 to 211 are important for the catalytic mechanism of both phosphorylation and dephosphorylation; it reads LEIRGIGIID. Glutamate 203 serves as a coordination point for Mg(2+). Residue arginine 244 is part of the active site. The segment at 265–270 is important for the catalytic mechanism of dephosphorylation; it reads PVKTGR.

Belongs to the HPrK/P family. In terms of assembly, homohexamer. The cofactor is Mg(2+).

The enzyme catalyses [HPr protein]-L-serine + ATP = [HPr protein]-O-phospho-L-serine + ADP + H(+). It catalyses the reaction [HPr protein]-O-phospho-L-serine + phosphate + H(+) = [HPr protein]-L-serine + diphosphate. In terms of biological role, catalyzes the ATP- as well as the pyrophosphate-dependent phosphorylation of a specific serine residue in HPr, a phosphocarrier protein of the phosphoenolpyruvate-dependent sugar phosphotransferase system (PTS). HprK/P also catalyzes the pyrophosphate-producing, inorganic phosphate-dependent dephosphorylation (phosphorolysis) of seryl-phosphorylated HPr (P-Ser-HPr). The two antagonistic activities of HprK/P are regulated by several intracellular metabolites, which change their concentration in response to the absence or presence of rapidly metabolisable carbon sources (glucose, fructose, etc.) in the growth medium. Therefore, by controlling the phosphorylation state of HPr, HPrK/P is a sensor enzyme that plays a major role in the regulation of carbon metabolism and sugar transport: it mediates carbon catabolite repression (CCR), and regulates PTS-catalyzed carbohydrate uptake and inducer exclusion. The sequence is that of HPr kinase/phosphorylase from Levilactobacillus brevis (strain ATCC 367 / BCRC 12310 / CIP 105137 / JCM 1170 / LMG 11437 / NCIMB 947 / NCTC 947) (Lactobacillus brevis).